The sequence spans 121 residues: Protein TusC (121 aa).

Belongs to the DsrF/TusC family. Heterohexamer, formed by a dimer of trimers. The hexameric TusBCD complex contains 2 copies each of TusB, TusC and TusD. The TusBCD complex interacts with TusE.

The protein resides in the cytoplasm. Part of a sulfur-relay system required for 2-thiolation of 5-methylaminomethyl-2-thiouridine (mnm(5)s(2)U) at tRNA wobble positions. This is Protein TusC from Yersinia enterocolitica serotype O:8 / biotype 1B (strain NCTC 13174 / 8081).